The primary structure comprises 858 residues: DNA replication licensing factor mcm4-A (858 aa).

Positions methionine 1–histidine 125 are disordered. Composition is skewed to polar residues over residues serine 54–alanine 68 and leucine 79–valine 94. The C4-type zinc finger occupies cysteine 301–cysteine 326. In terms of domain architecture, MCM spans isoleucine 453–valine 662. 8 residues coordinate ATP: tyrosine 466, arginine 492, lysine 511, serine 512, asparagine 613, arginine 638, arginine 727, and glutamate 730. The short motif at serine 637 to aspartate 640 is the Arginine finger element.

It belongs to the MCM family. Component of the mcm2-7 complex (RLF-M). The complex forms a toroidal hexameric ring with the proposed subunit order mcm2-mcm6-mcm4-mcm7-mcm3-mcm5. The heterodimer of mmcm3/mcm5 interacts with mcm4, mmcm6, mcm7 and weakly with mcm2. Component of the CMG helicase complex, composed of the mcm2-7 complex, the GINS complex and cdc45. In terms of processing, hyperphosphorylated during mitosis in a mechanism requiring cdc2-cyclin B and other kinases. Undergoes dephosphorylation after exiting mitosis, existing in a partially phosphorylated state in the cytosolic interphase mcm complex which associates with the pre-replication complexes (pre-Rcs). Complete dephosphorylation inactivates the mcm complex, preventing its binding to chromatin. Becomes actively phosphorylated during S phase once the mcm complex is assembled on the chromatin. This chromatin-associated phosphorylation occurs during the activation of the pre-Rcs and is independent of cdks. Phosphorylated by the cdc7-dbf4b complex.

Its subcellular location is the nucleus. The protein resides in the chromosome. It catalyses the reaction ATP + H2O = ADP + phosphate + H(+). Its function is as follows. Acts as a component of the MCM2-7 complex (MCM complex) which is the replicative helicase essential for 'once per cell cycle' DNA replication initiation and elongation in eukaryotic cells. Core component of CDC45-MCM-GINS (CMG) helicase, the molecular machine that unwinds template DNA during replication, and around which the replisome is built. The active ATPase sites in the MCM2-7 ring are formed through the interaction surfaces of two neighboring subunits such that a critical structure of a conserved arginine finger motif is provided in trans relative to the ATP-binding site of the Walker A box of the adjacent subunit. The six ATPase active sites, however, are likely to contribute differentially to the complex helicase activity. The sequence is that of DNA replication licensing factor mcm4-A (mcm4-a) from Xenopus laevis (African clawed frog).